The primary structure comprises 100 residues: Large ribosomal subunit protein bL21 (100 aa).

Belongs to the bacterial ribosomal protein bL21 family. As to quaternary structure, part of the 50S ribosomal subunit. Contacts protein L20.

In terms of biological role, this protein binds to 23S rRNA in the presence of protein L20. This is Large ribosomal subunit protein bL21 from Mycoplasmoides gallisepticum (strain R(low / passage 15 / clone 2)) (Mycoplasma gallisepticum).